A 423-amino-acid chain; its full sequence is Protein MANNAN SYNTHESIS-RELATED 2 (423 aa).

Residues 1–6 lie on the Cytoplasmic side of the membrane; that stretch reads MGVDLR. The chain crosses the membrane as a helical; Signal-anchor for type II membrane protein span at residues 7–26; sequence QVVAGILTITMFVMLGQMLH. Topologically, residues 27 to 423 are lumenal; sequence RDYFDAVQEK…KNHLAYSCFC (397 aa). 264–266 is a binding site for substrate; the sequence is DLR.

This sequence belongs to the glycosyltransferase GT106 family. Widely expressed.

Its subcellular location is the golgi apparatus membrane. Its pathway is glycan biosynthesis. Its function is as follows. Glycosyltransferase involved in mannan biosynthesis. The protein is Protein MANNAN SYNTHESIS-RELATED 2 of Arabidopsis thaliana (Mouse-ear cress).